The sequence spans 491 residues: Galactose-1-phosphate uridylyltransferase 1 (491 aa).

This sequence belongs to the galactose-1-phosphate uridylyltransferase type 2 family.

Its subcellular location is the cytoplasm. The enzyme catalyses alpha-D-galactose 1-phosphate + UDP-alpha-D-glucose = alpha-D-glucose 1-phosphate + UDP-alpha-D-galactose. The protein operates within carbohydrate metabolism; galactose metabolism. The sequence is that of Galactose-1-phosphate uridylyltransferase 1 (galT1) from Streptococcus pneumoniae serotype 4 (strain ATCC BAA-334 / TIGR4).